A 353-amino-acid polypeptide reads, in one-letter code: uncharacterized protein (353 aa).

A signal peptide spans 1 to 18; it reads MKFVLFAQLAAVAAPAIA. The interval 94-119 is disordered; it reads EGGNVRRVPGGPSQSARQIGDSSTPM. Residues 105–119 show a composition bias toward polar residues; the sequence is PSQSARQIGDSSTPM. N-linked (GlcNAc...) asparagine glycosylation is found at Asn-165 and Asn-312.

Belongs to the glycosyl hydrolase 3 family.

The protein localises to the secreted. This is an uncharacterized protein from Arthroderma benhamiae (strain ATCC MYA-4681 / CBS 112371) (Trichophyton mentagrophytes).